The following is a 175-amino-acid chain: MQPTPSEYARTPVRIEMQRSKERNSMVYKEMYNDAQRKYSEALDRISKLTDAYLREKAEVENFIKIKDREVEMSKKNANEKLLKDFLPVLDSIDAAIQAEKDNNLIRIRDQMLGVLSRYGLKPIKAEGSKFDPYLHEVVGVTADGEDGMVKYEVQRGYTLNDGVLRTSKVIVVKR.

This sequence belongs to the GrpE family. In terms of assembly, homodimer.

The protein resides in the cytoplasm. In terms of biological role, participates actively in the response to hyperosmotic and heat shock by preventing the aggregation of stress-denatured proteins, in association with DnaK and GrpE. It is the nucleotide exchange factor for DnaK and may function as a thermosensor. Unfolded proteins bind initially to DnaJ; upon interaction with the DnaJ-bound protein, DnaK hydrolyzes its bound ATP, resulting in the formation of a stable complex. GrpE releases ADP from DnaK; ATP binding to DnaK triggers the release of the substrate protein, thus completing the reaction cycle. Several rounds of ATP-dependent interactions between DnaJ, DnaK and GrpE are required for fully efficient folding. This is Protein GrpE from Thermoplasma acidophilum (strain ATCC 25905 / DSM 1728 / JCM 9062 / NBRC 15155 / AMRC-C165).